Reading from the N-terminus, the 220-residue chain is Adenylate kinase (220 aa).

10-15 (GAGKGT) contacts ATP. Residues 30 to 59 (STGDMLRAAVKAGTPLGVEAKGYMDAGKLV) form an NMP region. Residues Thr31, Arg36, 57–59 (KLV), 85–88 (GFPR), and Gln92 contribute to the AMP site. The tract at residues 122–159 (GRRTHPASGRTYHVKFNPPKVEGKDDVTGEPLIQRDDD) is LID. Residues Arg123 and 132–133 (TY) contribute to the ATP site. 2 residues coordinate AMP: Arg156 and Arg167. Gly206 is a binding site for ATP.

The protein belongs to the adenylate kinase family. In terms of assembly, monomer.

The protein localises to the cytoplasm. It carries out the reaction AMP + ATP = 2 ADP. Its pathway is purine metabolism; AMP biosynthesis via salvage pathway; AMP from ADP: step 1/1. Catalyzes the reversible transfer of the terminal phosphate group between ATP and AMP. Plays an important role in cellular energy homeostasis and in adenine nucleotide metabolism. This is Adenylate kinase from Burkholderia multivorans (strain ATCC 17616 / 249).